The chain runs to 183 residues: CKLF-like MARVEL transmembrane domain-containing protein 6 (183 aa).

Met1 is subject to N-acetylmethionine. The interval 1-20 (MENGAVYSPTTEEDPGPARG) is disordered. The Cytoplasmic portion of the chain corresponds to 1–39 (MENGAVYSPTTEEDPGPARGPRSGLAAYCFLGRLPLLRR). At Ser8 the chain carries Phosphoserine. The 128-residue stretch at 33–160 (RLPLLRRVLK…DFVTMLYEKR (128 aa)) folds into the MARVEL domain. Residues 40–60 (VLKGLQLSLSLLAFICEEVVS) form a helical membrane-spanning segment. At 61–67 (QCTLCGG) the chain is on the extracellular side. The helical transmembrane segment at 68 to 88 (LYFFEFVSCSAFLLSLLILIV) threads the bilayer. Residues 89-106 (YCTPFYERVDTTKVKSSD) are Cytoplasmic-facing. A helical transmembrane segment spans residues 107–127 (FYITLGTGCVFLLASIIFVST). The Extracellular segment spans residues 128 to 134 (HDRTSAE). The helical transmembrane segment at 135–155 (IAAIVFGFIASFMFLLDFVTM) threads the bilayer. Residues 156–183 (LYEKRQESQLRKSENTTRAEALTEPLNA) lie on the Cytoplasmic side of the membrane. Thr171 bears the Phosphothreonine mark.

The protein belongs to the chemokine-like factor family. In terms of assembly, interacts with PD-L1/CD274 (via transmembrane domain); the interaction is direct. Interacts with CMTM4. Interacts with CD58, ARG1, ENO1 and TMPO.

Its subcellular location is the cell membrane. It is found in the early endosome membrane. The protein resides in the recycling endosome membrane. Functionally, master regulator of recycling and plasma membrane expression of PD-L1/CD274, an immune inhibitory ligand critical for immune tolerance to self and antitumor immunity. Associates with both constitutive and IFNG-induced PD-L1/CD274 at recycling endosomes, where it protects PD-L1/CD274 from being targeted for lysosomal degradation, likely by preventing its ubiquitination. May stabilize PD-L1/CD274 expression on antigen presenting cells and potentiates inhibitory signaling by PDCD1/CD279, its receptor on T-cells, ultimately triggering T-cell anergy. The protein is CKLF-like MARVEL transmembrane domain-containing protein 6 (CMTM6) of Pongo abelii (Sumatran orangutan).